The primary structure comprises 117 residues: UPF0122 protein Cthe_0771 (117 aa).

This sequence belongs to the UPF0122 family.

In terms of biological role, might take part in the signal recognition particle (SRP) pathway. This is inferred from the conservation of its genetic proximity to ftsY/ffh. May be a regulatory protein. The sequence is that of UPF0122 protein Cthe_0771 from Acetivibrio thermocellus (strain ATCC 27405 / DSM 1237 / JCM 9322 / NBRC 103400 / NCIMB 10682 / NRRL B-4536 / VPI 7372) (Clostridium thermocellum).